Here is a 405-residue protein sequence, read N- to C-terminus: 5-azacytidine-induced protein 2 (405 aa).

Residues 1–198 (MDTLVEDDIC…TELQKARQTG (198 aa)) are homodimerization. Residues 40-197 (ALVTAYEDIK…RTELQKARQT (158 aa)) are a coiled coil. The segment at 229–270 (SDNMQHAYWELKREMSNLHLVTQVQAELLRKLKTSAAVKKAC) is interaction with TBK1 and IKBKE. Residues serine 331 and serine 366 each carry the phosphoserine modification. The segment at 357 to 377 (LEDNSWVFPSPPKSSETAFGE) is disordered.

Homodimer. Interacts with IKBKE and TBK1. Interacts with TICAM1. Interacts with TAX1BP1. Interacts with CALCOCO2. In terms of processing, ubiquitinated via 'Lys-48'-linked polyubiquitination by TRIM38, leading to its degradation. As to expression, testis, ovary, heart, lung, kidney and brain. Expressed mainly in the spermatocytes or spermatids in the testis.

The protein localises to the cytoplasm. In terms of biological role, adapter protein which binds TBK1 and IKBKE playing a role in antiviral innate immunity. Activates serine/threonine-protein kinase TBK1 and facilitates its oligomerization. Enhances the phosphorylation of NF-kappa-B p65 subunit RELA by TBK1. Promotes TBK1-induced as well as TNF-alpha or PMA-induced activation of NF-kappa-B. Participates in IFNB promoter activation via TICAM1. This Mus musculus (Mouse) protein is 5-azacytidine-induced protein 2 (Azi2).